We begin with the raw amino-acid sequence, 122 residues long: Small ribosomal subunit protein uS13 (122 aa).

Residues 95–122 (GLPVRGQRTHTNARTRKGPAKSIAGKKK) are disordered.

It belongs to the universal ribosomal protein uS13 family. As to quaternary structure, part of the 30S ribosomal subunit. Forms a loose heterodimer with protein S19. Forms two bridges to the 50S subunit in the 70S ribosome.

Functionally, located at the top of the head of the 30S subunit, it contacts several helices of the 16S rRNA. In the 70S ribosome it contacts the 23S rRNA (bridge B1a) and protein L5 of the 50S subunit (bridge B1b), connecting the 2 subunits; these bridges are implicated in subunit movement. Contacts the tRNAs in the A and P-sites. The chain is Small ribosomal subunit protein uS13 from Nitrobacter winogradskyi (strain ATCC 25391 / DSM 10237 / CIP 104748 / NCIMB 11846 / Nb-255).